Here is a 457-residue protein sequence, read N- to C-terminus: Tubulin gamma-2 chain (457 aa).

142 to 148 (AGGTGSG) contacts GTP.

The protein belongs to the tubulin family. In terms of assembly, interacts with Ote. In terms of tissue distribution, expressed in nurse cells and oocytes of developing egg chambers.

The protein resides in the cytoplasm. Its subcellular location is the cytoskeleton. It is found in the microtubule organizing center. The protein localises to the centrosome. It localises to the spindle. In terms of biological role, tubulin is the major constituent of microtubules. The gamma chain is found at microtubule organizing centers (MTOC) such as the spindle poles or the centrosome, suggesting that it is involved in the minus-end nucleation of microtubule assembly. Required for oocyte activation and consequently for organization of the female meiotic spindle. Essential for centrosome organization and assembly of biastral mitotic spindles in embryos. Plays a role in stabilizing the augmin complex on the meiotic spindle. The polypeptide is Tubulin gamma-2 chain (gammaTub37C) (Drosophila melanogaster (Fruit fly)).